A 2919-amino-acid chain; its full sequence is Cadherin EGF LAG seven-pass G-type receptor 2 (2919 aa).

The signal sequence occupies residues 1-31; that stretch reads MRSRAASAPLPTPLLPLLLLLLLLPPSPLLG. Topologically, residues 32–2380 are extracellular; sequence DQVGPCRSLG…GEILPLKTLT (2349 aa). The tract at residues 156-194 is disordered; sequence LRAGEGSPEESLGGRRKRNVNTAPQFQPPSYQATVPENQ. Over residues 175 to 194 the composition is skewed to polar residues; sequence VNTAPQFQPPSYQATVPENQ. 9 consecutive Cadherin domains span residues 182–289, 290–399, 400–505, 506–610, 611–712, 713–815, 816–921, 922–1023, and 1028–1146; these read QPPS…DPVF, EQQE…APQF, SEKR…APIF, VSTP…NPTF, TQPE…RPVF, QSSH…APQF, LRDS…PPVF, EQDE…PPVL, and ILFN…SPLL. N-linked (GlcNAc...) asparagine glycosylation is found at asparagine 486, asparagine 557, and asparagine 701. N-linked (GlcNAc...) asparagine glycans are attached at residues asparagine 1036, asparagine 1076, asparagine 1182, and asparagine 1212. The EGF-like 1; atypical domain occupies 1228–1286; it reads DDNICLREPCENYMRCVSVLRFDSSAPFIASSSVLFRPIHPVGGLRCRCPPGFTGDYCE. In terms of domain architecture, EGF-like 2; calcium-binding spans 1288–1318; it reads EVDLCYSRPCGPHGRCRSREGGYTCLCLDGY. Cystine bridges form between cysteine 1292-cysteine 1303, cysteine 1297-cysteine 1312, cysteine 1314-cysteine 1323, cysteine 1332-cysteine 1343, cysteine 1337-cysteine 1353, and cysteine 1355-cysteine 1365. Residues 1328–1366 form the EGF-like 3; calcium-binding domain; sequence HSGRCTPGVCKNGGTCVNLLVGGFKCDCPSGDFEKPFCQ. The region spanning 1367-1571 is the Laminin G-like 1 domain; it reads VTTRSFPARS…IANNGTVPGC (205 aa). Asparagine 1501 and asparagine 1565 each carry an N-linked (GlcNAc...) asparagine glycan. Disulfide bonds link cysteine 1545/cysteine 1571, cysteine 1578/cysteine 1589, cysteine 1583/cysteine 1598, and cysteine 1600/cysteine 1609. The 37-residue stretch at 1574 to 1610 folds into the EGF-like 4; calcium-binding domain; that stretch reads KKIVCDSSICHNGGTCVNQWNAFSCECPLGFGGKSCA. (3R)-3-hydroxyasparagine is present on asparagine 1591. A Laminin G-like 2 domain is found at 1614-1791; it reads ANPQRFLGSS…GESINVEPGC (178 aa). N-linked (GlcNAc...) asparagine glycosylation is present at asparagine 1741. The region spanning 1787–1829 is the EGF-like 5; calcium-binding domain; that stretch reads VEPGCSWPDPCDSNPCPTNSYCSNDWDSYSCSCVLGYYGDNCT. 13 disulfide bridges follow: cysteine 1791/cysteine 1802, cysteine 1797/cysteine 1817, cysteine 1819/cysteine 1828, cysteine 1832/cysteine 1843, cysteine 1837/cysteine 1855, cysteine 1857/cysteine 1866, cysteine 1887/cysteine 1899, cysteine 1889/cysteine 1906, cysteine 1908/cysteine 1921, cysteine 1924/cysteine 1936, cysteine 1926/cysteine 1943, cysteine 1945/cysteine 1954, and cysteine 1957/cysteine 1969. The N-linked (GlcNAc...) asparagine glycan is linked to asparagine 1827. The 38-residue stretch at 1830–1867 folds into the EGF-like 6; calcium-binding domain; sequence NVCDLNPCEHQSVCTRKPNTPHGYICECLPNYLGPYCE. One can recognise an EGF-like 7; calcium-binding domain in the interval 1883–1922; it reads TCGPCNCDVSKGFDPDCNKTSGECHCKENHYRPPGSPTCL. An N-linked (GlcNAc...) asparagine glycan is attached at asparagine 1900. A Laminin EGF-like domain is found at 1924-1971; sequence CDCYPTGSLSRVCDPEDGQCPCKPGVIGRQCDRCDNPFAEVTTNGCEV. Asparagine 2024, asparagine 2043, and asparagine 2061 each carry an N-linked (GlcNAc...) asparagine glycan. Positions 2199–2369 constitute a GAIN-B domain; that stretch reads ETTVILPESV…AVLMDMSRRE (171 aa). Residues 2216-2241 are disordered; that stretch reads VRSAGPGEAQETEELARRQRRHPELS. Intrachain disulfides connect cysteine 2319/cysteine 2351 and cysteine 2339/cysteine 2353. The tract at residues 2319–2369 is GPS; it reads CVFWNHSILVSGTGGWSARGCEVVFRNESHVSCQCNHMTSFAVLMDMSRRE. 2 N-linked (GlcNAc...) asparagine glycosylation sites follow: asparagine 2323 and asparagine 2345. The helical transmembrane segment at 2381 to 2401 threads the bilayer; sequence YVALGVTLAALMLTFLFLTLL. Topologically, residues 2402–2413 are cytoplasmic; that stretch reads RALRSNQHGIRR. Residues 2414–2433 form a helical membrane-spanning segment; sequence NLTAALGLAQLVFLLGINQA. Residues 2434–2438 are Extracellular-facing; that stretch reads DLPFA. A helical membrane pass occupies residues 2439 to 2459; that stretch reads CTVIAILLHFLYLCTFSWALL. Topologically, residues 2460–2480 are cytoplasmic; that stretch reads EALHLYRALTEVRDVNASPMR. A helical transmembrane segment spans residues 2481–2501; that stretch reads FYYMLGWGVPAFITGLAVGLD. Residues 2502 to 2518 are Extracellular-facing; the sequence is PEGYGNPDFCWLSVYDT. Residues 2519–2539 form a helical membrane-spanning segment; that stretch reads LIWSFAGPVAFAVSMSVFLYI. At 2540-2563 the chain is on the cytoplasmic side; the sequence is LSARASCAAQRQGFEKKGPVSGLR. Residues 2564 to 2584 traverse the membrane as a helical segment; it reads SSFTVLLLLSATWLLALLSVN. Residues 2585–2591 lie on the Extracellular side of the membrane; it reads SDTLLFH. A helical transmembrane segment spans residues 2592–2612; the sequence is YLFAACNCVQGPFIFLSYVVL. The Cytoplasmic portion of the chain corresponds to 2613–2919; sequence SKEVRKALKF…SEFLFFNFLH (307 aa). The interval 2690–2884 is disordered; sequence LNPGQVPPGL…PPRPPPRQSL (195 aa). Acidic residues predominate over residues 2718–2730; the sequence is TDSDSDLSLEDDQ. The span at 2791–2800 shows a compositional bias: polar residues; that stretch reads GTTTKENSGS. Basic and acidic residues predominate over residues 2803 to 2815; the sequence is LEERPRENGDALT. A compositionally biased stretch (low complexity) spans 2857–2868; it reads GTGSSRGSSISE.

Belongs to the G-protein coupled receptor 2 family. LN-TM7 subfamily. In terms of assembly, heterodimer of 2 chains generated by proteolytic processing; the large extracellular N-terminal fragment and the membrane-bound C-terminal fragment predominantly remain associated and non-covalently linked. The iron and 2-oxoglutarate dependent 3-hydroxylation of aspartate and asparagine is (R) stereospecific within EGF domains. Post-translationally, autoproteolytically processed at the GPS region of the GAIN-B domain; this cleavage modulates receptor activity. As to expression, expressed in the CNS and in the eye.

The protein resides in the cell membrane. Receptor that may have an important role in cell/cell signaling during nervous system formation. In Mus musculus (Mouse), this protein is Cadherin EGF LAG seven-pass G-type receptor 2.